Reading from the N-terminus, the 260-residue chain is Thrombin-like enzyme acutobin (260 aa).

The first 18 residues, 1 to 18 (MVLIRVLANLLILQLSYA), serve as a signal peptide directing secretion. A propeptide spanning residues 19–24 (QKSSEL) is cleaved from the precursor. The Peptidase S1 domain occupies 25–251 (VIGGVECDIN…YNDWIRSITA (227 aa)). Cystine bridges form between Cys-31–Cys-165, Cys-52–Cys-68, Cys-102–Cys-258, Cys-144–Cys-212, Cys-176–Cys-191, and Cys-202–Cys-227. His-67 functions as the Charge relay system in the catalytic mechanism. Asn-101 and Asn-105 each carry an N-linked (GlcNAc...) asparagine glycan. The active-site Charge relay system is the Asp-112. Asn-124 is a glycosylation site (N-linked (GlcNAc...) asparagine). The Charge relay system role is filled by Ser-206. Asn-253 carries N-linked (GlcNAc...) asparagine glycosylation.

Belongs to the peptidase S1 family. Snake venom subfamily. In terms of assembly, monomer. In terms of processing, N-glycosylated. In terms of tissue distribution, expressed by the venom gland.

The protein resides in the secreted. Functionally, thrombin-like snake venom serine protease that coagulates human fibrinogen by hydrolysis of the alpha chains (FGA). This chain is Thrombin-like enzyme acutobin, found in Deinagkistrodon acutus (Hundred-pace snake).